A 300-amino-acid polypeptide reads, in one-letter code: ATP-dependent (S)-NAD(P)H-hydrate dehydratase (300 aa).

The 283-residue stretch at 7-289 (IEARLKSIIP…ESIPSVFDQV (283 aa)) folds into the YjeF C-terminal domain. (6S)-NADPHX-binding positions include G107 and 160-166 (NVMEYRR). ATP contacts are provided by residues 194 to 198 (KGQVD) and 213 to 222 (GSPRRCGGQG). Residue D223 coordinates (6S)-NADPHX.

Belongs to the NnrD/CARKD family. Mg(2+) is required as a cofactor.

The enzyme catalyses (6S)-NADHX + ATP = ADP + phosphate + NADH + H(+). The catalysed reaction is (6S)-NADPHX + ATP = ADP + phosphate + NADPH + H(+). In terms of biological role, catalyzes the dehydration of the S-form of NAD(P)HX at the expense of ATP, which is converted to ADP. Together with NAD(P)HX epimerase, which catalyzes the epimerization of the S- and R-forms, the enzyme allows the repair of both epimers of NAD(P)HX, a damaged form of NAD(P)H that is a result of enzymatic or heat-dependent hydration. The chain is ATP-dependent (S)-NAD(P)H-hydrate dehydratase from Entamoeba histolytica (strain ATCC 30459 / HM-1:IMSS / ABRM).